We begin with the raw amino-acid sequence, 124 residues long: Succinate dehydrogenase cytochrome b556 subunit (124 aa).

Residues 1 to 29 lie on the Cytoplasmic side of the membrane; that stretch reads MTKIKQEIYNKRPTSPHLTIYKPQISSTL. A helical transmembrane segment spans residues 30 to 55; that stretch reads SILHRMTGVALFFVVSILVWWLILSK. The Periplasmic portion of the chain corresponds to 56–67; the sequence is YDNNYLQLARCC. Residues 68–88 form a helical membrane-spanning segment; sequence IIKICLVAFSYAWCYHLCNGI. Position 83 (His83) interacts with heme. Over 89-103 the chain is Cytoplasmic; that stretch reads RHLFWDIGYGFSIRA. A helical membrane pass occupies residues 104 to 124; the sequence is VNITGWCVVVCSILLTMLLWV.

It belongs to the cytochrome b560 family. As to quaternary structure, part of an enzyme complex containing four subunits: a flavoprotein, an iron-sulfur protein, plus two membrane-anchoring proteins, SdhC and SdhD. The complex can form homotrimers. Heme serves as cofactor.

The protein localises to the cell inner membrane. It participates in carbohydrate metabolism; tricarboxylic acid cycle. In terms of biological role, membrane-anchoring subunit of succinate dehydrogenase (SDH). The chain is Succinate dehydrogenase cytochrome b556 subunit (sdhC) from Rickettsia typhi (strain ATCC VR-144 / Wilmington).